The following is a 156-amino-acid chain: MSELTHVRADGSAHMVDVTGKNETSRTAVAEGFVKMRGDVVKQLFSAGLPKGDALPVARIAGIMGAKKTPDIIPLCHPLPLGKITVDFFELTDGVRIEASVKTRGVTGVEMEALTAVSTAALTVYDMIKAVDKMAVIDGIRVLSKTGGKSGDWSVQ.

Residues 75 to 77 (LCH) and 111 to 112 (ME) contribute to the substrate site. Residue aspartate 126 is part of the active site.

This sequence belongs to the MoaC family. As to quaternary structure, homohexamer; trimer of dimers.

It catalyses the reaction (8S)-3',8-cyclo-7,8-dihydroguanosine 5'-triphosphate = cyclic pyranopterin phosphate + diphosphate. Its pathway is cofactor biosynthesis; molybdopterin biosynthesis. Catalyzes the conversion of (8S)-3',8-cyclo-7,8-dihydroguanosine 5'-triphosphate to cyclic pyranopterin monophosphate (cPMP). This chain is Cyclic pyranopterin monophosphate synthase, found in Corynebacterium glutamicum (strain ATCC 13032 / DSM 20300 / JCM 1318 / BCRC 11384 / CCUG 27702 / LMG 3730 / NBRC 12168 / NCIMB 10025 / NRRL B-2784 / 534).